Here is a 268-residue protein sequence, read N- to C-terminus: Shikimate kinase (268 aa).

70–80 (PSGYGLKSSSA) lines the ATP pocket.

It belongs to the GHMP kinase family. Archaeal shikimate kinase subfamily.

The protein localises to the cytoplasm. It carries out the reaction shikimate + ATP = 3-phosphoshikimate + ADP + H(+). It participates in metabolic intermediate biosynthesis; chorismate biosynthesis; chorismate from D-erythrose 4-phosphate and phosphoenolpyruvate: step 5/7. The polypeptide is Shikimate kinase (aroK) (Thermoplasma acidophilum (strain ATCC 25905 / DSM 1728 / JCM 9062 / NBRC 15155 / AMRC-C165)).